The chain runs to 728 residues: Catalase-peroxidase (728 aa).

Residues W91–Y218 constitute a cross-link (tryptophyl-tyrosyl-methioninium (Trp-Tyr) (with M-244)). H92 (proton acceptor) is an active-site residue. The tryptophyl-tyrosyl-methioninium (Tyr-Met) (with W-91) cross-link spans Y218–M244. H259 lines the heme b pocket.

It belongs to the peroxidase family. Peroxidase/catalase subfamily. In terms of assembly, homodimer or homotetramer. Heme b serves as cofactor. Post-translationally, formation of the three residue Trp-Tyr-Met cross-link is important for the catalase, but not the peroxidase activity of the enzyme.

It carries out the reaction H2O2 + AH2 = A + 2 H2O. The enzyme catalyses 2 H2O2 = O2 + 2 H2O. Bifunctional enzyme with both catalase and broad-spectrum peroxidase activity. This chain is Catalase-peroxidase, found in Burkholderia thailandensis (strain ATCC 700388 / DSM 13276 / CCUG 48851 / CIP 106301 / E264).